The sequence spans 336 residues: Filaggrin (336 aa).

The tract at residues 1–313 (PDGSGRSSNR…GVQGAAASGQ (313 aa)) is disordered. Composition is skewed to low complexity over residues 16 to 26 (QLSPSQSSDSQ), 40 to 66 (SSSA…LAAD), and 73 to 98 (ARQG…SSSA). Composition is skewed to basic and acidic residues over residues 100–120 (RQGR…HSDF), 163–176 (DSQH…EQQR), and 184–195 (HQHEHEQPESGH). Over residues 285–311 (AQRGQSSSANRRAGSSSGSGVQGAAAS) the composition is skewed to low complexity.

This sequence belongs to the S100-fused protein family. Filaggrin is initially synthesized as a large, insoluble, highly phosphorylated precursor containing many tandem copies of 248 AA, which are not separated by large linker sequences. During terminal differentiation it is dephosphorylated and proteolytically cleaved. Expressed in the granular layer of the epidermis (at protein level). Expressed in the epidermis of the ear (at protein level).

It is found in the cytoplasmic granule. Aggregates keratin intermediate filaments and promotes disulfide-bond formation among the intermediate filaments during terminal differentiation of mammalian epidermis. The sequence is that of Filaggrin (Flg) from Mus musculus (Mouse).